The primary structure comprises 61 residues: Large ribosomal subunit protein uL29 (61 aa).

Belongs to the universal ribosomal protein uL29 family.

This chain is Large ribosomal subunit protein uL29, found in Campylobacter jejuni subsp. jejuni serotype O:6 (strain 81116 / NCTC 11828).